The sequence spans 498 residues: MPEEYLNAQKMEKLERIKSRGINPYPATFHPSHTSVQAVALLAELEKQENPPKEILRIAGRIMTLRDMGKISFMDIRDGSGKIQVFCRQNDLDEASIELLKDLDLGDFIGAEGSLMRTRTGEPSLAATKISLLSKSLLPLPEKWHGLQDVEKRYRQRYLDLISNADARQTFLTRSQVISAIRSFMSSKGFLEVETPVLQPEAGGALARPFITHHQALDCDFYMRIALELHLKRLIVGGFDRVYEIGRIFRNEGVSTRHNPEFTMMESYQAYADYKDVMDFLEEMVSSVVKEISGGYTVPFGDTTLDFTPPWPRLSMRDAVKQYAGIDFFDFPTKEALAAEMIRRKLKVDPAKDWGKLVDELVGEFVEPRLIQPTFLTDHPVAMSPLAKQKPEDPRLTERFEAICANMEIANAFSELNDPVEQRARFKEQLEKRNQLRTEESESIDEDFLAALAYGMPPTGGLGVGIDRLVMLLTNHDSIREVILFPALKDREDKGEQE.

Glutamate 401 and glutamate 408 together coordinate Mg(2+).

Belongs to the class-II aminoacyl-tRNA synthetase family. As to quaternary structure, homodimer. It depends on Mg(2+) as a cofactor.

The protein localises to the cytoplasm. It catalyses the reaction tRNA(Lys) + L-lysine + ATP = L-lysyl-tRNA(Lys) + AMP + diphosphate. The chain is Lysine--tRNA ligase from Dehalococcoides mccartyi (strain ATCC BAA-2266 / KCTC 15142 / 195) (Dehalococcoides ethenogenes (strain 195)).